The chain runs to 96 residues: Ribonuclease P protein component 1 (96 aa).

Belongs to the eukaryotic/archaeal RNase P protein component 1 family. As to quaternary structure, consists of a catalytic RNA component and at least 5 protein subunits.

It is found in the cytoplasm. It carries out the reaction Endonucleolytic cleavage of RNA, removing 5'-extranucleotides from tRNA precursor.. Its function is as follows. Part of ribonuclease P, a protein complex that generates mature tRNA molecules by cleaving their 5'-ends. This is Ribonuclease P protein component 1 from Methanococcus maripaludis (strain DSM 14266 / JCM 13030 / NBRC 101832 / S2 / LL).